Consider the following 400-residue polypeptide: Subtilisin-like protease 11 (400 aa).

A signal peptide spans 1–19; sequence MGLFKVIFTAVAALSAVDA. A propeptide spanning residues 20 to 117 is cleaved from the precursor; that stretch reads AELLSSAKSK…VEHDRHVYIS (98 aa). The 82-residue stretch at 35–116 folds into the Inhibitor I9 domain; the sequence is SYLVVMKDSV…FVEHDRHVYI (82 aa). The 274-residue stretch at 127–400 folds into the Peptidase S8 domain; that stretch reads SWGLGRVSHR…NKLLYNRSGK (274 aa). N138 is a glycosylation site (N-linked (GlcNAc...) asparagine). Catalysis depends on D159, which acts as the Charge relay system. N181 carries N-linked (GlcNAc...) asparagine glycosylation. The Charge relay system role is filled by H191. Residues N252 and N337 are each glycosylated (N-linked (GlcNAc...) asparagine). S346 acts as the Charge relay system in catalysis. N-linked (GlcNAc...) asparagine glycans are attached at residues N388 and N396.

Belongs to the peptidase S8 family.

It localises to the secreted. Its function is as follows. Secreted subtilisin-like serine protease with keratinolytic activity that contributes to pathogenicity. This Trichophyton verrucosum (strain HKI 0517) protein is Subtilisin-like protease 11 (SUB11).